A 344-amino-acid polypeptide reads, in one-letter code: tRNA N6-adenosine threonylcarbamoyltransferase (344 aa).

His-111 and His-115 together coordinate Fe cation. Residues 134-138, Asp-167, Gly-180, and Asn-273 each bind substrate; that span reads LVSGG. Position 301 (Asp-301) interacts with Fe cation.

The protein belongs to the KAE1 / TsaD family. The cofactor is Fe(2+).

The protein localises to the cytoplasm. It catalyses the reaction L-threonylcarbamoyladenylate + adenosine(37) in tRNA = N(6)-L-threonylcarbamoyladenosine(37) in tRNA + AMP + H(+). Functionally, required for the formation of a threonylcarbamoyl group on adenosine at position 37 (t(6)A37) in tRNAs that read codons beginning with adenine. Is involved in the transfer of the threonylcarbamoyl moiety of threonylcarbamoyl-AMP (TC-AMP) to the N6 group of A37, together with TsaE and TsaB. TsaD likely plays a direct catalytic role in this reaction. The chain is tRNA N6-adenosine threonylcarbamoyltransferase from Cupriavidus taiwanensis (strain DSM 17343 / BCRC 17206 / CCUG 44338 / CIP 107171 / LMG 19424 / R1) (Ralstonia taiwanensis (strain LMG 19424)).